The following is a 450-amino-acid chain: Probable glycine dehydrogenase (decarboxylating) subunit 1 (450 aa).

Belongs to the GcvP family. N-terminal subunit subfamily. The glycine cleavage system is composed of four proteins: P, T, L and H. In this organism, the P 'protein' is a heterodimer of two subunits.

The catalysed reaction is N(6)-[(R)-lipoyl]-L-lysyl-[glycine-cleavage complex H protein] + glycine + H(+) = N(6)-[(R)-S(8)-aminomethyldihydrolipoyl]-L-lysyl-[glycine-cleavage complex H protein] + CO2. Its function is as follows. The glycine cleavage system catalyzes the degradation of glycine. The P protein binds the alpha-amino group of glycine through its pyridoxal phosphate cofactor; CO(2) is released and the remaining methylamine moiety is then transferred to the lipoamide cofactor of the H protein. The chain is Probable glycine dehydrogenase (decarboxylating) subunit 1 from Desulfotalea psychrophila (strain LSv54 / DSM 12343).